A 100-amino-acid chain; its full sequence is Guanine nucleotide-binding protein subunit gamma 2 (100 aa).

Position 1 is an N-acetylmethionine (Met-1). A coiled-coil region spans residues 19 to 55; the sequence is TRGKHRIQAELKRLEQEARFLEEELEQLEKMDNASAS. The G protein gamma domain occupies 21 to 100; that stretch reads GKHRIQAELK…EAKRCGCSIL (80 aa). Positions 90–96 are regulates lipidation and cell membrane subcellular localization; the sequence is KEAKRCG. The S-palmitoyl cysteine moiety is linked to residue Cys-95. Cys-97 is subject to Cysteine methyl ester. Residue Cys-97 is the site of S-farnesyl cysteine attachment. Residues 98–100 constitute a propeptide, removed in mature form; it reads SIL.

G proteins are composed of 3 units, alpha, beta and gamma. GPG1 interacts with the beta subunit GB1. The dimer GB1-GG2 interacts with NDL1, NDL2 and NDL3. Binds to NUDT7. As to expression, mostly expressed in roots (excluded from the stele), seedlings (especially at the hypocotyl/root junction), floral stems, floral buds, flowers and siliques, and, to a lower extent, in leaves (restricted to guard cells). Also present in hydathods.

Its subcellular location is the cell membrane. Its function is as follows. Guanine nucleotide-binding proteins (G proteins) are involved as a modulator or transducer in various transmembrane signaling systems. The beta and gamma chains are required for the GTPase activity, for replacement of GDP by GTP, and for G protein-effector interaction. Involved in the abscisic acid (ABA) and ethylene signaling pathways. Regulates basipetal transport of auxin (IAA) in roots and hypocotyls, and thus modulates root architecture (e.g. lateral root formation). The heterotrimeric G-protein controls defense responses to necrotrophic and vascular fungi probably by modulating cell wall-related genes expression; involved in resistance to Plectosphaerella cucumerina. In Arabidopsis thaliana (Mouse-ear cress), this protein is Guanine nucleotide-binding protein subunit gamma 2 (GG2).